The sequence spans 852 residues: Ubiquitin carboxyl-terminal hydrolase 4 (852 aa).

One can recognise a Rhodanese domain in the interval 172-296 (ASGTVLLVDV…WSNAHPDFCV (125 aa)). The interval 369–393 (RSSSSSSNINERPGSVPPQLSNGST) is disordered. One can recognise a USP domain in the interval 488–849 (VGLVNCGNSC…NAYVLFYHRI (362 aa)). Cys-497 acts as the Nucleophile in catalysis. The active-site Proton acceptor is His-806.

The protein belongs to the peptidase C19 family.

The protein localises to the cytoplasm. It is found in the late endosome membrane. It carries out the reaction Thiol-dependent hydrolysis of ester, thioester, amide, peptide and isopeptide bonds formed by the C-terminal Gly of ubiquitin (a 76-residue protein attached to proteins as an intracellular targeting signal).. Its activity is regulated as follows. RFU1 is an inhibitor of deubiquitination activity. Functionally, ubiquitin thioesterase that acts at the late endosome/prevacuolar compartment to recover ubiquitin from ubiquitinated membrane proteins en route to the vacuole. Also removes ubiquitin from soluble proteins targeted to proteasomes. Is essential to maintain a normal level of free ubiquitin. Required for promoting coordination of DNA replication and avoids DNA overreplication. The protein is Ubiquitin carboxyl-terminal hydrolase 4 (DOA4) of Eremothecium gossypii (strain ATCC 10895 / CBS 109.51 / FGSC 9923 / NRRL Y-1056) (Yeast).